The following is a 656-amino-acid chain: FAST kinase domain-containing protein 3, mitochondrial (656 aa).

The region spanning 587 to 645 is the RAP domain; sequence VALCIDGPQRFCLGSKHLLGKEAIKQRHLRLLGYQVVQVPYHELELLTSRLELVDYLQR.

The protein belongs to the FAST kinase family.

It is found in the mitochondrion. Its function is as follows. Required for normal mitochondrial respiration. Increases steady-state levels and half-lives of a subset of mature mitochondrial mRNAs MT-ND2, MT-ND3, MT-CYTB, MT-CO2, and MT-ATP8/6. Promotes MT-CO1 mRNA translation and increases mitochondrial complex IV assembly and activity. The sequence is that of FAST kinase domain-containing protein 3, mitochondrial (Fastkd3) from Rattus norvegicus (Rat).